The primary structure comprises 383 residues: Probable endopolygalacturonase C (383 aa).

The signal sequence occupies residues 1 to 16 (MVRQLILISSLLAAVA). Residues 17–40 (VRAPADPAHPMVTEAPDVNLVEKR) constitute a propeptide that is removed on maturation. Cysteines 44 and 62 form a disulfide. PbH1 repeat units follow at residues 175–206 (STDL…DIGE) and 207–228 (STYI…AINS). The active-site Proton donor is the D221. C223 and C239 form a disulfide bridge. Residue H243 is part of the active site. PbH1 repeat units follow at residues 253–279 (RDDN…RIKT) and 287–309 (VSEV…VIEQ). A glycan (N-linked (GlcNAc...) asparagine) is linked at N260. Disulfide bonds link C348–C353 and C372–C381.

It belongs to the glycosyl hydrolase 28 family.

Its subcellular location is the secreted. The catalysed reaction is (1,4-alpha-D-galacturonosyl)n+m + H2O = (1,4-alpha-D-galacturonosyl)n + (1,4-alpha-D-galacturonosyl)m.. Functionally, involved in maceration and soft-rotting of plant tissue. Hydrolyzes the 1,4-alpha glycosidic bonds of de-esterified pectate in the smooth region of the plant cell wall. This Aspergillus niger protein is Probable endopolygalacturonase C (pgaC).